The sequence spans 362 residues: Putative membrane-bound acyltransferase YfiQ (362 aa).

Transmembrane regions (helical) follow at residues 11 to 31 (CISC…MLQA), 44 to 64 (FRTL…FLLA), 82 to 102 (VIFV…TSAM), 119 to 139 (VFLG…YMLH), 153 to 173 (WVLS…SAAS), 181 to 201 (GGAF…FCLA), 220 to 240 (WVVY…SYVG), 252 to 267 (IMLY…FHLF), 283 to 303 (YSFS…VLLL), and 308 to 328 (IPAV…PIMT).

Belongs to the acyltransferase 3 family.

It localises to the cell membrane. This chain is Putative membrane-bound acyltransferase YfiQ (yfiQ), found in Bacillus subtilis (strain 168).